Reading from the N-terminus, the 84-residue chain is Tenecin-1 (84 aa).

A signal peptide spans 1 to 19 (MKLTIFALVACFFILQIAA). Residues 20-41 (FPLEEAATAEEIEQGEHIRVKR) constitute a propeptide that is removed on maturation. Cystine bridges form between Cys-44/Cys-75, Cys-61/Cys-81, and Cys-65/Cys-83.

It belongs to the invertebrate defensin family. Type 1 subfamily.

The protein localises to the secreted. In terms of biological role, bactericidal protein produced in response to injury. It is cytotoxic to Gram-positive bacteria. This chain is Tenecin-1, found in Tenebrio molitor (Yellow mealworm beetle).